The primary structure comprises 329 residues: Holliday junction branch migration complex subunit RuvB (329 aa).

The tract at residues 1–180 (MKNILQSTEC…FGIPIHLEFY (180 aa)) is large ATPase domain (RuvB-L). ATP is bound by residues I19, R20, G61, K64, T65, T66, 127–129 (EDF), R170, Y180, and R217. A Mg(2+)-binding site is contributed by T65. A small ATPAse domain (RuvB-S) region spans residues 181–252 (STEELIKVIQ…FADKALLRLG (72 aa)). The segment at 255 to 329 (KLGLDRQDIQ…ISYLKEQSYI (75 aa)) is head domain (RuvB-H). 2 residues coordinate DNA: R308 and R313.

The protein belongs to the RuvB family. As to quaternary structure, homohexamer. Forms an RuvA(8)-RuvB(12)-Holliday junction (HJ) complex. HJ DNA is sandwiched between 2 RuvA tetramers; dsDNA enters through RuvA and exits via RuvB. An RuvB hexamer assembles on each DNA strand where it exits the tetramer. Each RuvB hexamer is contacted by two RuvA subunits (via domain III) on 2 adjacent RuvB subunits; this complex drives branch migration. In the full resolvosome a probable DNA-RuvA(4)-RuvB(12)-RuvC(2) complex forms which resolves the HJ.

Its subcellular location is the cytoplasm. The catalysed reaction is ATP + H2O = ADP + phosphate + H(+). Its function is as follows. The RuvA-RuvB-RuvC complex processes Holliday junction (HJ) DNA during genetic recombination and DNA repair, while the RuvA-RuvB complex plays an important role in the rescue of blocked DNA replication forks via replication fork reversal (RFR). RuvA specifically binds to HJ cruciform DNA, conferring on it an open structure. The RuvB hexamer acts as an ATP-dependent pump, pulling dsDNA into and through the RuvAB complex. RuvB forms 2 homohexamers on either side of HJ DNA bound by 1 or 2 RuvA tetramers; 4 subunits per hexamer contact DNA at a time. Coordinated motions by a converter formed by DNA-disengaged RuvB subunits stimulates ATP hydrolysis and nucleotide exchange. Immobilization of the converter enables RuvB to convert the ATP-contained energy into a lever motion, pulling 2 nucleotides of DNA out of the RuvA tetramer per ATP hydrolyzed, thus driving DNA branch migration. The RuvB motors rotate together with the DNA substrate, which together with the progressing nucleotide cycle form the mechanistic basis for DNA recombination by continuous HJ branch migration. Branch migration allows RuvC to scan DNA until it finds its consensus sequence, where it cleaves and resolves cruciform DNA. The protein is Holliday junction branch migration complex subunit RuvB of Ehrlichia canis (strain Jake).